A 135-amino-acid polypeptide reads, in one-letter code: Biglycan (135 aa).

5 LRR repeats span residues 4 to 24 (KLNY…DLPE), 25 to 46 (TLNE…DLLR), 49 to 72 (KLYR…SFLP), 73 to 95 (TLRE…PDLK), and 96 to 117 (LLQV…DFCP). The N-linked (GlcNAc...) asparagine glycan is linked to N65. N-linked (GlcNAc...) asparagine glycosylation is present at N106.

The protein belongs to the small leucine-rich proteoglycan (SLRP) family. SLRP class I subfamily. As to quaternary structure, homodimer. Forms a ternary complex with MFAP2 and ELN. The two attached glycosaminoglycan chains can be either chondroitin sulfate or dermatan sulfate. Found in several connective tissues, especially in articular cartilages.

It localises to the secreted. Its subcellular location is the extracellular space. The protein resides in the extracellular matrix. Its function is as follows. May be involved in collagen fiber assembly. This is Biglycan (BGN) from Oryctolagus cuniculus (Rabbit).